Consider the following 648-residue polypeptide: Magnetosome protein MamZ (648 aa).

Residues 1-431 form a major facilitator domain region; the sequence is MLEAWMPKSG…YAAWLLANGI (431 aa). Transmembrane regions (helical) follow at residues 28–49, 69–87, 94–113, 119–143, 163–182, 188–207, 252–273, 285–305, 317–335, 341–361, 373–395, 407–428, 449–468, 488–506, 518–538, 558–574, 595–612, and 618–634; these read IIYLLMTVGSLVAALSISIQPL, IQVVAEIVSIVCVGWFGLL, VRIIATGFLIAVAGAAMSLL, LAFGAAGLVLFYLTRVLLTVGADTV, LMGNLVFMMVFGGTMLSAII, YKGGVFIIMCLPLLIGIAGF, FYTRADVIILSLFFSLWCISVS, AHAAVMIGLLGLAVLAAIPLW, AIGASLSLAAVGYIWLGMF, WLVALPLLMVGIGHAGCFVTL, ILGAMVGAGYLVGGLGTVMLVQS, APFILMGTGKMLVTLYAAWLLA, PLVFLTAALPFVWLIGRSVI, YLGDWAFTFLIISLSMRPV, YRRMIGLFAFFYAVLHVLAYV, FILLGLAAFLLLIPLAF, ATYVINALVALHFILAAN, and PYVYAAAVIVLLWYRFY. A ferric reductase-like domain, required for correct magnetite crystal formation region spans residues 444–645; sequence KVDWKPLVFL…WRGGNVLRAL (202 aa).

This sequence in the N-terminal section; belongs to the major facilitator superfamily. As to quaternary structure, probably interacts with FtsZ-like and MamY proteins.

It localises to the magnetosome membrane. Required for correct biomineralization of the magnetosome; probably converts and then transports some form of iron. It is partially functionally redundant with MamH. May function with MamX, MamY amd Mms6 in biomineralization. Despite its strong similarity to MsrQ (AC V6EX82) this protein does not genetically interact with bona fide MsrP (AC V6F0A4), which is encoded elsewhere in the genome. The chain is Magnetosome protein MamZ from Magnetospirillum gryphiswaldense (strain DSM 6361 / JCM 21280 / NBRC 15271 / MSR-1).